The chain runs to 465 residues: Serine carboxypeptidase 24 (465 aa).

The first 24 residues, 1–24 (MARTHFIFLLLVALLSTTFPSSSS), serve as a signal peptide directing secretion. 3 N-linked (GlcNAc...) asparagine glycosylation sites follow: asparagine 54, asparagine 105, and asparagine 139. Cystine bridges form between cysteine 88–cysteine 349, cysteine 249–cysteine 260, and cysteine 285–cysteine 317. Residue serine 181 is part of the active site. N-linked (GlcNAc...) asparagine glycosylation is found at asparagine 250, asparagine 293, and asparagine 338. A propeptide spans 287–316 (AAQQKKNTTGFFVRMKNTLLRRRLVSGYDP) (linker peptide). Residues aspartate 386 and histidine 438 contribute to the active site.

Belongs to the peptidase S10 family. As to quaternary structure, heterodimer. In terms of processing, N-glycosylated. As to expression, expressed in shoots, leaves, cauline leaves, siliques and flowers. Expressed a low levels in roots and stems.

It localises to the secreted. The protein resides in the extracellular space. It carries out the reaction Preferential release of a C-terminal arginine or lysine residue.. With respect to regulation, completely inhibited by phenylmethylsulfonyl fluoride (PMSF) and partially by leupeptin. Active serine carboxypeptidase with broad substrate preference, including basic and hydrophilic groups. Processes a protein involved in an early event in the brassinosteroid signaling pathway. In Arabidopsis thaliana (Mouse-ear cress), this protein is Serine carboxypeptidase 24 (SCPL24).